The primary structure comprises 236 residues: Purine nucleoside phosphorylase DeoD-type (236 aa).

H5 contributes to the a purine D-ribonucleoside binding site. Phosphate is bound by residues G21, R25, R44, and 88-91 (RVGT). A purine D-ribonucleoside contacts are provided by residues 180 to 182 (DME) and 204 to 205 (SD). D205 serves as the catalytic Proton donor.

The protein belongs to the PNP/UDP phosphorylase family. In terms of assembly, homohexamer; trimer of homodimers.

The catalysed reaction is a purine D-ribonucleoside + phosphate = a purine nucleobase + alpha-D-ribose 1-phosphate. It catalyses the reaction a purine 2'-deoxy-D-ribonucleoside + phosphate = a purine nucleobase + 2-deoxy-alpha-D-ribose 1-phosphate. Functionally, catalyzes the reversible phosphorolytic breakdown of the N-glycosidic bond in the beta-(deoxy)ribonucleoside molecules, with the formation of the corresponding free purine bases and pentose-1-phosphate. This Buchnera aphidicola subsp. Schizaphis graminum (strain Sg) protein is Purine nucleoside phosphorylase DeoD-type.